Consider the following 218-residue polypeptide: Very-long-chain (3R)-3-hydroxyacyl-CoA dehydratase (218 aa).

The Cytoplasmic portion of the chain corresponds to 1 to 6 (MKTYLS). The chain crosses the membrane as a helical span at residues 7–29 (IYYLIQFCGHSWIFTNMTTRFLF). Residues 30–38 (FGQDAFADT) are Lumenal-facing. The helical transmembrane segment at 39-61 (FYSIGLVMQGCQLLSILELAHIL) threads the bilayer. Over 62-67 (LGVEQN) the chain is Cytoplasmic. The helical transmembrane segment at 68-87 (GFLPMFLQVAERFIILFVVI) threads the bilayer. Topologically, residues 88–96 (TSQEEVQSK) are lumenal. Residues 97 to 116 (YIVCALFFIWNLWDVIRYPY) form a helical membrane-spanning segment. Topologically, residues 117-136 (DMLAAVDTDYSALTWLRHTW) are cytoplasmic. A helical transmembrane segment spans residues 137–159 (WIVAYPLSVLAEAYTIYESLPYF). Catalysis depends on residues Y141 and E148. Topologically, residues 160–178 (ESLGTYSFKMALPVSLSFH) are lumenal. Residues 179 to 201 (FPYILTLYLVLQPVGMLYICSCL) form a helical membrane-spanning segment. Over 202 to 218 (WSERKQYFQRKLKLKKN) the chain is Cytoplasmic.

Belongs to the very long-chain fatty acids dehydratase HACD family.

The protein localises to the endoplasmic reticulum membrane. The enzyme catalyses a very-long-chain (3R)-3-hydroxyacyl-CoA = a very-long-chain (2E)-enoyl-CoA + H2O. The catalysed reaction is (3R)-hydroxyhexadecanoyl-CoA = (2E)-hexadecenoyl-CoA + H2O. Its pathway is lipid metabolism; fatty acid biosynthesis. In terms of biological role, catalyzes the third of the four reactions of the long-chain fatty acids elongation cycle. This endoplasmic reticulum-bound enzymatic process, allows the addition of two carbons to the chain of long- and very long-chain fatty acids/VLCFAs per cycle. This enzyme catalyzes the dehydration of the 3-hydroxyacyl-CoA intermediate into trans-2,3-enoyl-CoA, within each cycle of fatty acid elongation. Thereby, it participates in the production of VLCFAs of different chain lengths that are involved in multiple biological processes as precursors of membrane lipids and lipid mediators. The chain is Very-long-chain (3R)-3-hydroxyacyl-CoA dehydratase from Xenopus laevis (African clawed frog).